The chain runs to 530 residues: Netrin-G2 (530 aa).

A signal peptide spans 1 to 17; it reads MLHLLALFLHCLPLASG. Cystine bridges form between cysteine 22/cysteine 39, cysteine 61/cysteine 81, and cysteine 69/cysteine 77. One can recognise a Laminin N-terminal domain in the interval 35–286; the sequence is EFYACQPKVM…AISNIEVIGR (252 aa). The tract at residues 69-88 is NGL discriminant loop I; sequence CSHENPYLCSNECDASNPDL. Asparagine 122 and asparagine 128 each carry an N-linked (GlcNAc...) asparagine glycan. Cysteine 171 and cysteine 195 are oxidised to a cystine. Residues 201–203 are NGL discriminant loop II; that stretch reads RWA. The segment at 264-267 is NGL discriminant loop III; it reads TYVQ. Cystine bridges form between cysteine 287–cysteine 296, cysteine 289–cysteine 305, cysteine 307–cysteine 316, cysteine 319–cysteine 344, cysteine 353–cysteine 362, cysteine 355–cysteine 373, cysteine 376–cysteine 385, cysteine 388–cysteine 406, cysteine 409–cysteine 421, cysteine 411–cysteine 427, cysteine 429–cysteine 438, cysteine 441–cysteine 451, cysteine 456–cysteine 469, cysteine 463–cysteine 475, and cysteine 477–cysteine 486. 3 Laminin EGF-like domains span residues 287–346, 353–408, and 409–453; these read CKCN…ACAT, CECY…VCIE, and CNCN…GCYP. Residue asparagine 310 is glycosylated (N-linked (GlcNAc...) asparagine). An N-linked (GlcNAc...) asparagine glycan is attached at asparagine 395. Residue asparagine 422 is glycosylated (N-linked (GlcNAc...) asparagine). A lipid anchor (GPI-anchor amidated glycine) is attached at glycine 507. Residues 508–530 constitute a propeptide, removed in mature form; the sequence is AAPRPATLLGCLLLLGLAARLGR.

As to quaternary structure, interacts with LRRC4. In terms of processing, N-glycosylated.

The protein resides in the cell membrane. Involved in controlling patterning and neuronal circuit formation at the laminar, cellular, subcellular and synaptic levels. Promotes neurite outgrowth of both axons and dendrites. The protein is Netrin-G2 of Homo sapiens (Human).